The following is a 133-amino-acid chain: Crossover junction endodeoxyribonuclease Hjc (133 aa).

Glu-12 lines the Mg(2+) pocket. Ser-32 is an active-site residue. Residues Asp-36 and Glu-49 each contribute to the Mg(2+) site.

This sequence belongs to the Holliday junction resolvase Hjc family. Homodimer. Mg(2+) is required as a cofactor.

It carries out the reaction Endonucleolytic cleavage at a junction such as a reciprocal single-stranded crossover between two homologous DNA duplexes (Holliday junction).. A structure-specific endonuclease that resolves Holliday junction (HJ) intermediates during genetic recombination. Cleaves 4-way DNA junctions introducing paired nicks in opposing strands, leaving a 5'-terminal phosphate and a 3'-terminal hydroxyl group that are subsequently ligated to produce recombinant products. This chain is Crossover junction endodeoxyribonuclease Hjc, found in Methanocaldococcus jannaschii (strain ATCC 43067 / DSM 2661 / JAL-1 / JCM 10045 / NBRC 100440) (Methanococcus jannaschii).